Reading from the N-terminus, the 352-residue chain is C5a anaphylatoxin chemotactic receptor 1 (352 aa).

Topologically, residues 1–38 (MASMNFSPPEYPDYGTATLDPNIFVDESLNTPKLSVPD) are extracellular. Tyr11 and Tyr14 each carry sulfotyrosine. A helical transmembrane segment spans residues 39 to 65 (MIALVIFVMVFLVGVPGNFLVVWVTGF). Topologically, residues 66–70 (EVRRT) are cytoplasmic. The chain crosses the membrane as a helical span at residues 71–94 (INAIWFLNLAVADLLSCLALPILF). Residues 95 to 111 (SSIVQQGYWPFGNAACR) lie on the Extracellular side of the membrane. The cysteines at positions 110 and 189 are disulfide-linked. The chain crosses the membrane as a helical span at residues 112–133 (ILPSLILLNMYASILLLTTISA). Residues 134–154 (DRFVLVFNPIWCQNYRGPQLA) lie on the Cytoplasmic side of the membrane. The chain crosses the membrane as a helical span at residues 155–175 (WAACSVAWAVALLLTVPSFIF). Residues 176-202 (RGVHTEYFPFWMTCGVDYSGVGVLVER) lie on the Extracellular side of the membrane. A helical membrane pass occupies residues 203–228 (GVAILRLLMGFLGPLVILSICYTFLL). Topologically, residues 229–244 (IRTWSRKATRSTKTLK) are cytoplasmic. Residues 245–267 (VVVAVVVSFFVLWLPYQVTGMMM) traverse the membrane as a helical segment. Over 268-284 (ALFYKHSESFRRVSRLD) the chain is Extracellular. A helical transmembrane segment spans residues 285-305 (SLCVAVAYINCCINPIIYVLA). Residues 306 to 352 (AQGFHSRFLKSLPARLRQVLAEESVGRDSKSITLSTVDTPAQKSQGV) are Cytoplasmic-facing. Phosphoserine occurs at positions 316, 329, 334, 336, and 340.

The protein belongs to the G-protein coupled receptor 1 family. Homodimer. May also form higher-order oligomers. Interacts (when phosphorylated) with ARRB1 and ARRB2; the interaction is associated with internalization of C5aR. In terms of processing, sulfation plays a critical role in the association of C5aR with C5a, but no significant role in the ability of the receptor to transduce a signal and mobilize calcium in response to a small peptide agonist. Phosphorylated on serine residues in response to C5a binding, resulting in internalization of the receptor and short-term desensitization to C5a.

The protein resides in the cell membrane. It is found in the cytoplasmic vesicle. Functionally, receptor for the chemotactic and inflammatory peptide anaphylatoxin C5a. The ligand interacts with at least two sites on the receptor: a high-affinity site on the extracellular N-terminus, and a second site in the transmembrane region which activates downstream signaling events. Receptor activation stimulates chemotaxis, granule enzyme release, intracellular calcium release and superoxide anion production. The chain is C5a anaphylatoxin chemotactic receptor 1 (C5AR1) from Canis lupus familiaris (Dog).